Consider the following 102-residue polypeptide: uncharacterized protein (102 aa).

Helical transmembrane passes span 38–58 (FYVW…QLIL) and 64–84 (VLFL…LFQF).

It is found in the membrane. This is an uncharacterized protein from Saccharomyces cerevisiae (strain ATCC 204508 / S288c) (Baker's yeast).